Here is a 958-residue protein sequence, read N- to C-terminus: Valine--tRNA ligase (958 aa).

Residues 45–55 (PNVTGSLHMGH) carry the 'HIGH' region motif. The short motif at 571–575 (KMSKS) is the 'KMSKS' region element. K574 provides a ligand contact to ATP. The stretch at 892–958 (AAERTRLDKE…EALERLKQAS (67 aa)) forms a coiled coil.

Belongs to the class-I aminoacyl-tRNA synthetase family. ValS type 1 subfamily. As to quaternary structure, monomer.

The protein resides in the cytoplasm. The enzyme catalyses tRNA(Val) + L-valine + ATP = L-valyl-tRNA(Val) + AMP + diphosphate. Catalyzes the attachment of valine to tRNA(Val). As ValRS can inadvertently accommodate and process structurally similar amino acids such as threonine, to avoid such errors, it has a 'posttransfer' editing activity that hydrolyzes mischarged Thr-tRNA(Val) in a tRNA-dependent manner. This chain is Valine--tRNA ligase, found in Bradyrhizobium diazoefficiens (strain JCM 10833 / BCRC 13528 / IAM 13628 / NBRC 14792 / USDA 110).